The sequence spans 200 residues: Probable GTP-binding protein EngB (200 aa).

An EngB-type G domain is found at 22 to 197 (DLPEIAFAGR…WQAIQDAVEE (176 aa)). Residues 30–37 (GRSNVGKS), 57–61 (GRTQL), 78–81 (DLPG), 145–148 (TKCD), and 176–178 (FSA) contribute to the GTP site. 2 residues coordinate Mg(2+): Ser37 and Thr59.

The protein belongs to the TRAFAC class TrmE-Era-EngA-EngB-Septin-like GTPase superfamily. EngB GTPase family. Requires Mg(2+) as cofactor.

In terms of biological role, necessary for normal cell division and for the maintenance of normal septation. This chain is Probable GTP-binding protein EngB, found in Trichlorobacter lovleyi (strain ATCC BAA-1151 / DSM 17278 / SZ) (Geobacter lovleyi).